Reading from the N-terminus, the 344-residue chain is L-rhamnose-proton symporter (344 aa).

The next 10 membrane-spanning stretches (helical) occupy residues 4-24 (AITMGIFWHLIGAASAACFYA), 38-58 (WSVGGIVSWIILPWAISALLL), 68-88 (FSLSTLLPVFLFGAMWGIGNI), 101-121 (MGIGIAIGITLIVGTLMTPII), 137-157 (TLLGVLVALIGVGIVTRAGQL), 175-195 (LVLAVMCGIFSAGMSFAMNAA), 214-234 (LPSYVVIMGGGAIINLGFCFI), 259-279 (VLLSALGGLMWYLQFFFYAWG), 290-310 (ISWMLHMSFYVLCGGIVGLVL), and 323-343 (VLSLGCVVIIVAANIVGIGMA).

Belongs to the L-rhamnose transporter (TC 2.A.7.6) family.

Its subcellular location is the cell inner membrane. It catalyses the reaction L-rhamnopyranose(in) + H(+)(in) = L-rhamnopyranose(out) + H(+)(out). Functionally, uptake of L-rhamnose across the cytoplasmic membrane with the concomitant transport of protons into the cell (symport system). The sequence is that of L-rhamnose-proton symporter from Shigella flexneri.